A 299-amino-acid chain; its full sequence is Probable transport accessory protein MmpS3 (299 aa).

A disordered region spans residues 1-72; that stretch reads MSGPNPPGRE…EHVTGGPYVP (72 aa). The chain crosses the membrane as a helical span at residues 101 to 121; sequence VVGVAAIIAAVALVVSVSLLV. The segment covering 128–139 has biased composition (polar residues); sequence KLATGDTTSSAP. Residues 128–213 form a disordered region; that stretch reads KLATGDTTSS…TTTTPTGPRQ (86 aa). Positions 150 to 163 are enriched in pro residues; that stretch reads PAPPPPPPAPPPTT. The segment covering 164 to 176 has biased composition (low complexity); that stretch reads EIPTATETQTVTV. Residues 177–193 are compositionally biased toward pro residues; that stretch reads TPPPPPPPATTTAPPPA.

It belongs to the MmpS family.

The protein localises to the cell membrane. The sequence is that of Probable transport accessory protein MmpS3 (mmpS3) from Mycobacterium tuberculosis (strain CDC 1551 / Oshkosh).